Consider the following 223-residue polypeptide: MQKQRFCLDTTAITDSDVRKSLGVSNISESAEKIMDIIAQARVQLDISCHIPYDTVYKELVGFLTREGCAPETLIKVDTWLVKKTPNRYEIKIPAEIFYEYIKDLRERINKGMRISENAMYETALEAYILSKPDEKDREDVLNEVLSKTVNSFRVKYRNALRGGTLDSAPDLDVLLLAKELDAAVVANDEGIEKWAQRLGLRFVNARDFPFILQEYLDLWDKK.

This sequence belongs to the HARP family.

It catalyses the reaction Endonucleolytic cleavage of RNA, removing 5'-extranucleotides from tRNA precursor.. Its function is as follows. RNA-free RNase P that catalyzes the removal of the 5'-leader sequence from pre-tRNA to produce the mature 5'-terminus. This is RNA-free ribonuclease P from Methanococcus maripaludis (strain DSM 14266 / JCM 13030 / NBRC 101832 / S2 / LL).